The primary structure comprises 444 residues: UDP-N-acetylglucosamine 1-carboxyvinyltransferase (444 aa).

22–23 (KN) is a binding site for phosphoenolpyruvate. R94 lines the UDP-N-acetyl-alpha-D-glucosamine pocket. Catalysis depends on D119, which acts as the Proton donor. Residues D309 and V331 each coordinate UDP-N-acetyl-alpha-D-glucosamine.

It belongs to the EPSP synthase family. MurA subfamily.

Its subcellular location is the cytoplasm. It carries out the reaction phosphoenolpyruvate + UDP-N-acetyl-alpha-D-glucosamine = UDP-N-acetyl-3-O-(1-carboxyvinyl)-alpha-D-glucosamine + phosphate. It functions in the pathway cell wall biogenesis; peptidoglycan biosynthesis. Functionally, cell wall formation. Adds enolpyruvyl to UDP-N-acetylglucosamine. The polypeptide is UDP-N-acetylglucosamine 1-carboxyvinyltransferase (Chlamydia abortus (strain DSM 27085 / S26/3) (Chlamydophila abortus)).